The sequence spans 65 residues: Alpha-toxin Bot11 (65 aa).

The LCN-type CS-alpha/beta domain occupies Lys2 to Arg64. 4 cysteine pairs are disulfide-bonded: Cys12/Cys63, Cys16/Cys36, Cys22/Cys46, and Cys26/Cys48.

Belongs to the long (4 C-C) scorpion toxin superfamily. Sodium channel inhibitor family. Alpha subfamily. As to expression, expressed by the venom gland.

Its subcellular location is the secreted. In terms of biological role, alpha toxins bind voltage-independently at site-3 of sodium channels (Nav) and inhibit the inactivation of the activated channels, thereby blocking neuronal transmission. The chain is Alpha-toxin Bot11 from Buthus occitanus tunetanus (Common European scorpion).